The chain runs to 267 residues: tRNA pseudouridine synthase A (267 aa).

The active-site Nucleophile is Asp51. Tyr109 is a binding site for substrate.

It belongs to the tRNA pseudouridine synthase TruA family. In terms of assembly, homodimer.

It catalyses the reaction uridine(38/39/40) in tRNA = pseudouridine(38/39/40) in tRNA. Its function is as follows. Formation of pseudouridine at positions 38, 39 and 40 in the anticodon stem and loop of transfer RNAs. The protein is tRNA pseudouridine synthase A of Staphylococcus epidermidis (strain ATCC 35984 / DSM 28319 / BCRC 17069 / CCUG 31568 / BM 3577 / RP62A).